A 602-amino-acid chain; its full sequence is MRSVTNAFGNSGELNDQVDETGYRKFDIHEGILFCIELSETMFKESSDLEYKSPLLEILESLDELMSQLVITRPGTAIGCYFYYCNREDAKEGIYELFPLRDINATFMKKLNDLLEDLSSGRISLYDYFMFQQTGSEKQVRLSVLFTFMLDTFLEEIPGQKQLSNKRVFLFTDIDKPQEAQDIDERARLRRLTIDLFDNKVNFATFFIGYADKPFDNEFYSDILQLGSHTNENTGLDSEFDGPSTKPIDAKYIKSRILRKKEVKRIMFQCPLILDEKTNFIVGVKGYTMYTHEKAGVRYKLVYEHEDIRQEAYSKRKFLNPITGEDVTGKTVKVYPYGDLDINLSDSQDQIVMEAYTQKDAFLKIIGFRSSSKSIHYFNNIDKSSFIVPDEAKYEGSIRTLASLLKILRKKDKIAILWGKLKSNSHPSLYTLSPSSVKDYNEGFYLYRVPFLDEIRKFPSLLSYDDGSEHKLDYDNMKKVTQSIMGYFNLRDGYNPSDFKNPLLQKHYKVLHDYLLQIETTFDENETPNTKKDRMMREDDSLRKLYYIRNKILESEKSEDPIIQRLNKYVKIWNMFYKKFNDDNISIKEEKKPFDKKPKFNI.

In terms of domain architecture, Ku spans 268–483 (FQCPLILDEK…YDNMKKVTQS (216 aa)). 3 positions are modified to phosphoserine: serine 370, serine 371, and serine 372.

Belongs to the ku70 family. In terms of assembly, heterodimer of YKU70/HDF1 and YKU80/HDF2. Sumoylated by MMS21.

It is found in the nucleus. The protein localises to the chromosome. It localises to the telomere. The catalysed reaction is ATP + H2O = ADP + phosphate + H(+). Its function is as follows. Single-stranded DNA-dependent ATP-dependent helicase. Involved in non-homologous end joining (NHEJ) DNA double strand break repair. DNA-binding is sequence-independent but has a high affinity to nicks in double-stranded DNA and to the ends of duplex DNA. Binds to naturally occurring chromosomal ends, and therefore provides chromosomal end protection. Appears to have a role in recruitment of telomerase and CDC13 to the telomere and the subsequent telomere elongation. Required also for telomere recombination to repair telomeric ends in the absence of telomerase. KU70, of the KU70/KU80 heterodimer, binds to the stem loop of TLC1, the RNA component of telomerase. Involved in telomere maintenance. Interacts with telomeric repeats and subtelomeric sequences thereby controlling telomere length and protecting against subtelomeric rearrangement. Maintains telomeric chromatin, which is involved in silencing the expression of genes located at the telomere. Required for mating-type switching. This chain is ATP-dependent DNA helicase II subunit 1 (YKU70), found in Saccharomyces cerevisiae (strain ATCC 204508 / S288c) (Baker's yeast).